Consider the following 207-residue polypeptide: C-type lectin domain family 2 member D11 (207 aa).

Over 1–44 the chain is Cytoplasmic; it reads MSAKKASQPMLNTTGSLQEGEMGKMFHGKCLRIVSPESPAKLYC. A phosphoserine mark is found at Ser-7 and Ser-16. Residues 45–65 traverse the membrane as a helical; Signal-anchor for type II membrane protein segment; sequence CYGVIMVLSVAVVALSVALSV. Over 66–207 the chain is Extracellular; that stretch reads KMTPQISTIN…LQCKTPFSPM (142 aa). One can recognise a C-type lectin domain in the interval 87–198; that stretch reads VGNKCFYFSE…SCSKLNSYSL (112 aa). An N-linked (GlcNAc...) asparagine glycan is attached at Asn-100.

It is found in the cell membrane. Its function is as follows. Receptor for KLRB1B that protects target cells against natural killer cell-mediated lysis. This is C-type lectin domain family 2 member D11 (Clec2d11) from Rattus norvegicus (Rat).